An 807-amino-acid chain; its full sequence is 85/88 kDa calcium-independent phospholipase A2 (807 aa).

The residue at position 13 (Ser13) is a Phosphoserine. ANK repeat units lie at residues 120 to 147, 151 to 181, 185 to 215, 219 to 248, 251 to 281, 286 to 312, 316 to 345, 349 to 378, and 382 to 403; these read WTVT…ANST, EGCT…QMDV, KGET…GLNQ, QGLT…RCNI, PGGF…QIHS, YGAS…DVDS, SGNT…NAGA, HGNT…EVDT, and FGET…KALL. 2 helical membrane passes run 481–501 and 512–532; these read LLCL…LIAI and LFDW…ILHS. The PNPLA domain maps to 482 to 666; sequence LCLDGGGVKG…LANNPTLDAM (185 aa). The GXGXXG signature appears at 486-491; that stretch reads GGGVKG. Positions 518 to 522 match the GXSXG motif; that stretch reads GTSTG. The Nucleophile role is filled by Ser520. Catalysis depends on Asp653, which acts as the Proton acceptor. Residues 653–655 carry the DGA/G motif; that stretch reads DGG. The tract at residues 678 to 687 is calmodulin-binding (1-9-14 motif); it reads RKGQGNKVKK. The calmodulin-binding (IQ motif) stretch occupies residues 749-760; it reads AWCEMVGIQYFR.

In terms of assembly, homodimer formed by catalytic domains tightly interacting through a large hydrophobic interface. The contact area involves 3 alpha helices, several loops and a part of the beta sheet from each monomer. Both active sites of the dimer are in close proximity adopting an open conformation that provide sufficient space for phospholipid access and favoring cooperativity in deacylation-reacylation reactions. Each monomer has 9 ankyrin repeats stacked side-by-side in an elongated structure oriented outwards from the catalytic core. As to expression, expressed in neurons of central and peripheral nervous system. Highly expressed in Purkinje cells in cerebellum and dorsal and ventral horn neurons in the spinal cord. Expressed in testis (at protein level). Expressed in skeletal muscle (at protein level).

It is found in the cytoplasm. It localises to the cell membrane. Its subcellular location is the mitochondrion. The protein resides in the cell projection. The protein localises to the pseudopodium. The catalysed reaction is a 1,2-diacyl-sn-glycero-3-phosphocholine + H2O = a 1-acyl-sn-glycero-3-phosphocholine + a fatty acid + H(+). It catalyses the reaction a 1-O-alkyl-2-acyl-sn-glycero-3-phosphocholine + H2O = a 1-O-alkyl-sn-glycero-3-phosphocholine + a fatty acid + H(+). The enzyme catalyses 1,2-dihexadecanoyl-sn-glycero-3-phosphocholine + H2O = 1-hexadecanoyl-sn-glycero-3-phosphocholine + hexadecanoate + H(+). It carries out the reaction 1-hexadecanoyl-2-(9Z-octadecenoyl)-sn-glycero-3-phosphocholine + H2O = 1-hexadecanoyl-sn-glycero-3-phosphocholine + (9Z)-octadecenoate + H(+). The catalysed reaction is 1-hexadecanoyl-2-(9Z,12Z-octadecadienoyl)-sn-glycero-3-phosphocholine + H2O = (9Z,12Z)-octadecadienoate + 1-hexadecanoyl-sn-glycero-3-phosphocholine + H(+). It catalyses the reaction 1-hexadecanoyl-2-(5Z,8Z,11Z,14Z-eicosatetraenoyl)-sn-glycero-3-phosphocholine + H2O = 1-hexadecanoyl-sn-glycero-3-phosphocholine + (5Z,8Z,11Z,14Z)-eicosatetraenoate + H(+). The enzyme catalyses 1-octadecanoyl-2-(5Z,8Z,11Z,14Z-eicosatetraenoyl)-sn-glycero-3-phosphocholine + H2O = 1-octadecanoyl-sn-glycero-3-phosphocholine + (5Z,8Z,11Z,14Z)-eicosatetraenoate + H(+). It carries out the reaction 1-hexadecanoyl-2-(5Z,8Z,11Z,14Z-eicosatetraenoyl)-sn-glycero-3-phosphoethanolamine + H2O = 1-hexadecanoyl-sn-glycero-3-phosphoethanolamine + (5Z,8Z,11Z,14Z)-eicosatetraenoate + H(+). The catalysed reaction is 1,2-dihexadecanoyl-sn-glycero-3-phosphate + H2O = 1-hexadecanoyl-sn-glycero-3-phosphate + hexadecanoate + H(+). It catalyses the reaction a 1-acyl-sn-glycero-3-phosphocholine + H2O = sn-glycerol 3-phosphocholine + a fatty acid + H(+). The enzyme catalyses 1-hexadecanoyl-sn-glycero-3-phosphocholine + H2O = sn-glycerol 3-phosphocholine + hexadecanoate + H(+). It carries out the reaction 1-(5Z,8Z,11Z,14Z-eicosatetraenoyl)-sn-glycero-3-phosphocholine + H2O = sn-glycerol 3-phosphocholine + (5Z,8Z,11Z,14Z)-eicosatetraenoate + H(+). The catalysed reaction is 2-(5Z,8Z,11Z,14Z)-eicosatetraenoyl-sn-glycero-3-phosphocholine + H2O = sn-glycerol 3-phosphocholine + (5Z,8Z,11Z,14Z)-eicosatetraenoate + H(+). It catalyses the reaction 1-O-hexadecyl-2-(5Z,8Z,11Z,14Z)-eicosatetraenoyl-sn-glycero-3-phosphocholine + H2O = 1-O-hexadecyl-sn-glycero-3-phosphocholine + (5Z,8Z,11Z,14Z)-eicosatetraenoate + H(+). The enzyme catalyses 1-O-hexadecyl-2-acetyl-sn-glycero-3-phosphocholine + H2O = 1-O-hexadecyl-sn-glycero-3-phosphocholine + acetate + H(+). It carries out the reaction hexadecanoyl-CoA + H2O = hexadecanoate + CoA + H(+). The catalysed reaction is 1',3'-bis[1,2-di-(9Z-octadecenoyl)-sn-glycero-3-phospho]-glycerol + H2O = 1'-[1,2-di-(9Z-octadecenoyl)-sn-glycero-3-phospho]-3'-[1-(9Z-octadecenoyl)-sn-glycero-3-phospho]-glycerol + (9Z)-octadecenoate + H(+). It catalyses the reaction 1'-[1,2-di-(9Z-octadecenoyl)-sn-glycero-3-phospho]-3'-[1-(9Z-octadecenoyl)-sn-glycero-3-phospho]-glycerol + H2O = 1',3'-bis-[1-(9Z-octadecenoyl)-sn-glycero-3-phospho]-glycerol + (9Z)-octadecenoate + H(+). The enzyme catalyses 1',3'-bis-[1,2-di-(9Z,12Z-octadecadienoyl)-sn-glycero-3-phospho]-glycerol + H2O = 1'-[1,2-di-(9Z,12Z-octadecadienoyl)-sn-glycero-3-phospho]-3'-[1-(9Z,12Z-octadecadienoyl)-sn-glycero-3-phospho]-glycerol + (9Z,12Z)-octadecadienoate + H(+). It carries out the reaction 1-octadecanoyl-2-(15-hydroxy-(5Z,8Z,11Z,13E)-eicosatetraenoyl)-sn-glycero-3-phosphoethanolamine + H2O = 1-octadecanoyl-sn-glycero-3-phosphoethanolamine + 15-hydroxy-(5Z,8Z,11Z,13E)-eicosatetraenoate + H(+). With respect to regulation, inhibited by calcium-activated calmodulin. Activated by ATP. Inhibited by bromoenol lactone (BEL). Functionally, calcium-independent phospholipase involved in phospholipid remodeling with implications in cellular membrane homeostasis, mitochondrial integrity and signal transduction. Hydrolyzes the ester bond of the fatty acyl group attached at sn-1 or sn-2 position of phospholipids (phospholipase A1 and A2 activity respectively), producing lysophospholipids that are used in deacylation-reacylation cycles. Hydrolyzes both saturated and unsaturated long fatty acyl chains in various glycerophospholipid classes such as phosphatidylcholines, phosphatidylethanolamines and phosphatidates, with a preference for hydrolysis at sn-2 position. Can further hydrolyze lysophospholipids carrying saturated fatty acyl chains (lysophospholipase activity). Upon oxidative stress, contributes to remodeling of mitochondrial phospholipids in pancreatic beta cells, in a repair mechanism to reduce oxidized lipid content. Preferentially hydrolyzes oxidized polyunsaturated fatty acyl chains from cardiolipins, yielding monolysocardiolipins that can be reacylated with unoxidized fatty acyls to regenerate native cardiolipin species. Hydrolyzes oxidized glycerophosphoethanolamines present in pancreatic islets, releasing oxidized polyunsaturated fatty acids such as hydroxyeicosatetraenoates (HETEs). Has thioesterase activity toward fatty-acyl CoA releasing CoA-SH known to facilitate fatty acid transport and beta-oxidation in mitochondria particularly in skeletal muscle. Plays a role in regulation of membrane dynamics and homeostasis. Selectively hydrolyzes sn-2 arachidonoyl group in plasmalogen phospholipids, structural components of lipid rafts and myelin. Regulates F-actin polymerization at the pseudopods, which is required for both speed and directionality of MCP1/CCL2-induced monocyte chemotaxis. Targets membrane phospholipids to produce potent lipid signaling messengers. Generates lysophosphatidate (LPA, 1-acyl-glycerol-3-phosphate), which acts via G-protein receptors in various cell types. Has phospholipase A2 activity toward platelet-activating factor (PAF, 1-O-alkyl-2-acetyl-sn-glycero-3-phosphocholine), likely playing a role in inactivation of this potent pro-inflammatory signaling lipid. In response to glucose, amplifies calcium influx in pancreatic beta cells to promote INS secretion. The sequence is that of 85/88 kDa calcium-independent phospholipase A2 (Pla2g6) from Mus musculus (Mouse).